The following is a 159-amino-acid chain: MTLSILVAHDLQRVIGFENQLPWHLPNDLKHVKKLSTGHTLVMGRKTFESIGKPLPNRRNVVLTSDTSFNVVGVDVIHSIEDIYQLPGHVFIFGGQILFEEMIDKVDDMYITVIEGKFRGDTFFPPYTFEDWEVASSVEGKLDEKNTIPHTFLHLIRKK.

One can recognise a DHFR domain in the interval 2–157 (TLSILVAHDL…IPHTFLHLIR (156 aa)). 6–8 (LVA) serves as a coordination point for substrate. Residues 7–8 (VA) and 15–20 (IGFENQ) each bind NADP(+). Asp28 serves as a coordination point for substrate. 44–47 (GRKT) is an NADP(+) binding site. Arg58 serves as a coordination point for substrate. Residues 63–66 (LTSD) and 93–98 (FGGQIL) each bind NADP(+). Thr112 lines the substrate pocket.

Belongs to the dihydrofolate reductase family.

The enzyme catalyses (6S)-5,6,7,8-tetrahydrofolate + NADP(+) = 7,8-dihydrofolate + NADPH + H(+). It participates in cofactor biosynthesis; tetrahydrofolate biosynthesis; 5,6,7,8-tetrahydrofolate from 7,8-dihydrofolate: step 1/1. In terms of biological role, key enzyme in folate metabolism. Catalyzes an essential reaction for de novo glycine and purine synthesis, and for DNA precursor synthesis. This is Dihydrofolate reductase (folA) from Staphylococcus aureus (strain MW2).